The following is a 374-amino-acid chain: PqqA peptide cyclase (374 aa).

Residues 4–224 (IEPPMGLLAE…ERLKGVMVID (221 aa)) enclose the Radical SAM core domain. [4Fe-4S] cluster contacts are provided by Cys18, Cys22, and Cys25.

This sequence belongs to the radical SAM superfamily. PqqE family. As to quaternary structure, interacts with PqqD. The interaction is necessary for activity of PqqE. [4Fe-4S] cluster is required as a cofactor.

It carries out the reaction [PQQ precursor protein] + S-adenosyl-L-methionine = E-Y cross-linked-[PQQ precursor protein] + 5'-deoxyadenosine + L-methionine + H(+). Its pathway is cofactor biosynthesis; pyrroloquinoline quinone biosynthesis. Functionally, catalyzes the cross-linking of a glutamate residue and a tyrosine residue in the PqqA protein as part of the biosynthesis of pyrroloquinoline quinone (PQQ). This is PqqA peptide cyclase from Granulibacter bethesdensis (strain ATCC BAA-1260 / CGDNIH1).